The following is a 562-amino-acid chain: NAD-dependent malic enzyme (562 aa).

Catalysis depends on Y101, which acts as the Proton donor. R154 serves as a coordination point for NAD(+). Catalysis depends on K172, which acts as the Proton acceptor. Residues E243, D244, and D267 each coordinate a divalent metal cation. Residues D267 and N415 each contribute to the NAD(+) site.

This sequence belongs to the malic enzymes family. Homotetramer. It depends on Mg(2+) as a cofactor. Mn(2+) serves as cofactor.

It carries out the reaction (S)-malate + NAD(+) = pyruvate + CO2 + NADH. The catalysed reaction is oxaloacetate + H(+) = pyruvate + CO2. The chain is NAD-dependent malic enzyme from Aliivibrio salmonicida (strain LFI1238) (Vibrio salmonicida (strain LFI1238)).